The following is a 139-amino-acid chain: Holo-[acyl-carrier-protein] synthase (139 aa).

The Mg(2+) site is built by Asp8 and Glu57.

It belongs to the P-Pant transferase superfamily. AcpS family. Mg(2+) serves as cofactor.

It is found in the cytoplasm. It carries out the reaction apo-[ACP] + CoA = holo-[ACP] + adenosine 3',5'-bisphosphate + H(+). In terms of biological role, transfers the 4'-phosphopantetheine moiety from coenzyme A to a Ser of acyl-carrier-protein. This is Holo-[acyl-carrier-protein] synthase from Dinoroseobacter shibae (strain DSM 16493 / NCIMB 14021 / DFL 12).